Consider the following 101-residue polypeptide: Urease subunit beta 1 (101 aa).

The protein belongs to the urease beta subunit family. As to quaternary structure, heterotrimer of UreA (gamma), UreB (beta) and UreC (alpha) subunits. Three heterotrimers associate to form the active enzyme.

The protein resides in the cytoplasm. The enzyme catalyses urea + 2 H2O + H(+) = hydrogencarbonate + 2 NH4(+). It participates in nitrogen metabolism; urea degradation; CO(2) and NH(3) from urea (urease route): step 1/1. Functionally, disruption of the ure1 gene cluster suggests that it protects brucellae during their passage through the stomach. The major route of infection in human brucellosis is oral. This is Urease subunit beta 1 from Brucella abortus (strain 2308).